Reading from the N-terminus, the 167-residue chain is 6,7-dimethyl-8-ribityllumazine synthase (167 aa).

Residues F23, 57–59 (TYE), and 81–83 (AVI) each bind 5-amino-6-(D-ribitylamino)uracil. (2S)-2-hydroxy-3-oxobutyl phosphate is bound at residue 86 to 87 (GT). Residue H89 is the Proton donor of the active site. F119 is a binding site for 5-amino-6-(D-ribitylamino)uracil. R133 contributes to the (2S)-2-hydroxy-3-oxobutyl phosphate binding site.

The protein belongs to the DMRL synthase family.

The enzyme catalyses (2S)-2-hydroxy-3-oxobutyl phosphate + 5-amino-6-(D-ribitylamino)uracil = 6,7-dimethyl-8-(1-D-ribityl)lumazine + phosphate + 2 H2O + H(+). It participates in cofactor biosynthesis; riboflavin biosynthesis; riboflavin from 2-hydroxy-3-oxobutyl phosphate and 5-amino-6-(D-ribitylamino)uracil: step 1/2. Catalyzes the formation of 6,7-dimethyl-8-ribityllumazine by condensation of 5-amino-6-(D-ribitylamino)uracil with 3,4-dihydroxy-2-butanone 4-phosphate. This is the penultimate step in the biosynthesis of riboflavin. This is 6,7-dimethyl-8-ribityllumazine synthase from Myxococcus xanthus (strain DK1622).